An 886-amino-acid polypeptide reads, in one-letter code: Cytosolic carboxypeptidase-like protein 5 (886 aa).

Positions 157–570 (YPFSYSDCQD…AMAIAALDMA (414 aa)) constitute a Peptidase M14 domain. Zn(2+) is bound by residues His-252 and Glu-255. Over residues 344 to 353 (AKSPTNQQPT) the composition is skewed to polar residues. 2 disordered regions span residues 344-363 (AKSPTNQQPTLHLPPEAPLS) and 374-401 (EAHLGQSPDGENPATWPETEPAEEKTDP). Residue His-434 coordinates Zn(2+). Glu-516 (proton donor/acceptor) is an active-site residue. Disordered stretches follow at residues 602–737 (GLTS…RNMG) and 783–846 (TRLQ…PAFS). A compositionally biased stretch (polar residues) spans 621-635 (PKSNNSLPVSCSENA). The segment covering 643 to 654 (STGTSTGGSSSS) has biased composition (low complexity). A compositionally biased stretch (polar residues) spans 655 to 666 (QQNSPQMKNSPS). A compositionally biased stretch (low complexity) spans 714-737 (STTSSLAPSPTLASSGPTSSRNMG). A compositionally biased stretch (polar residues) spans 805–815 (SSPTSPIPQTR). At Ser-841 the chain carries Phosphoserine.

It belongs to the peptidase M14 family. The cofactor is Zn(2+). Widely expressed. Highly expressed in testis, and moderately in pituitary, brain, eye and kidney.

It is found in the cytoplasm. It localises to the cytosol. The protein resides in the nucleus. The protein localises to the cytoskeleton. Its subcellular location is the spindle. It is found in the midbody. The catalysed reaction is gamma-L-glutamyl-L-glutamyl-[protein] + H2O = L-glutamyl-[protein] + L-glutamate. It carries out the reaction (L-glutamyl)(n+1)-gamma-L-glutamyl-L-glutamyl-[protein] + H2O = (L-glutamyl)(n)-gamma-L-glutamyl-L-glutamyl-[protein] + L-glutamate. It catalyses the reaction C-terminal L-alpha-aminoacyl-L-glutamyl-[tubulin] + H2O = C-terminal L-alpha-aminoacyl-[tubulin] + L-glutamate. The enzyme catalyses C-terminal L-alpha-aminoacyl-L-glutamyl-L-glutamyl-[tubulin] + H2O = C-terminal L-alpha-aminoacyl-L-glutamyl-[tubulin] + L-glutamate. In terms of biological role, metallocarboxypeptidase that mediates deglutamylation of tubulin and non-tubulin target proteins. Catalyzes the removal of polyglutamate side chains present on the gamma-carboxyl group of glutamate residues within the C-terminal tail of alpha- and beta-tubulin. Cleaves alpha- and gamma-linked polyglutamate tubulin side-chain, as well as the branching point glutamate. Also catalyzes the removal of alpha-linked glutamate residues from the carboxy-terminus of alpha-tubulin. Mediates deglutamylation of nucleotidyltransferase CGAS, leading to CGAS antiviral defense response activation. This Mus musculus (Mouse) protein is Cytosolic carboxypeptidase-like protein 5.